Reading from the N-terminus, the 567-residue chain is MAFVSEREIVRKIFSKKIDFTILAFFYISSIFFLLCSGVLFQYFTAAFTKGNCYECSMKLDYIKQFYFSLETAWYLISAVAVFIASVFIQHRIKAYLTLLAITWIVLTITDVALIHALDNIAMNNILLNILYNLFGAILLSLFMCLSNSLLFHLNKIKHIPMILSAMIPLVSAIIIAILITAVIYLLFARQAVEIEMDISEGSDIAYVGVKDNEESFGFLNDKKTDTPTYLDVIKNGSLIYNDTQGLSGADIYIVSGCYALPDLLRNVPLDAKKSFLNVKKLEITQKLPMMGFIQGESADVMPKAASRLSLSKQDDKFMLASSVTDSQIKFKSNNAQLMVAFAFMPITTNGILHDYTYDIIINDKKYKIENHVAPLSRLDKNKKMKCEYQQISDLTNTYNINANYLTGFLLVLKPDDIINYNNSPSVLLKTDFAFYKKTYQKLDKIYDDISNGKLSSLRATGISQFSINGKHLSLRPESEIIISEGSLYGLVNKSKKIKIYGTADLVFVDNKIMNLRKITYLQSKLEIFGSSIMDILKYIFGLGLLAISIKFIHSYFKNDVNENLFL.

A run of 6 helical transmembrane segments spans residues 20–40 (FTIL…SGVL), 69–89 (SLET…SVFI), 95–115 (AYLT…VALI), 126–146 (ILLN…FMCL), 168–188 (IPLV…YLLF), and 528–548 (IFGS…LLAI).

Its subcellular location is the cell membrane. This is an uncharacterized protein from Escherichia coli (strain K12).